Reading from the N-terminus, the 178-residue chain is Large ribosomal subunit protein bL25 (178 aa).

The protein belongs to the bacterial ribosomal protein bL25 family. CTC subfamily. In terms of assembly, part of the 50S ribosomal subunit; part of the 5S rRNA/L5/L18/L25 subcomplex. Contacts the 5S rRNA. Binds to the 5S rRNA independently of L5 and L18.

Its function is as follows. This is one of the proteins that binds to the 5S RNA in the ribosome where it forms part of the central protuberance. The polypeptide is Large ribosomal subunit protein bL25 (Campylobacter lari (strain RM2100 / D67 / ATCC BAA-1060)).